The sequence spans 256 residues: Spheroidene monooxygenase (256 aa).

The segment covering 1-23 has biased composition (low complexity); the sequence is MTNELSNAAGASQQGPAASSFSA. The segment at 1 to 26 is disordered; sequence MTNELSNAAGASQQGPAASSFSADTP.

Belongs to the CrtA family. Heme serves as cofactor.

The enzyme catalyses spheroidene + 4 reduced [2Fe-2S]-[ferredoxin] + 2 O2 + 4 H(+) = spheroiden-2-one + 4 oxidized [2Fe-2S]-[ferredoxin] + 3 H2O. The catalysed reaction is spirilloxanthin + 4 reduced [2Fe-2S]-[ferredoxin] + 2 O2 + 4 H(+) = 2-oxospirilloxanthin + 4 oxidized [2Fe-2S]-[ferredoxin] + 3 H2O. It carries out the reaction 2-oxospirilloxanthin + 4 reduced [2Fe-2S]-[ferredoxin] + 2 O2 + 4 H(+) = 2,2'-dioxospirilloxanthin + 4 oxidized [2Fe-2S]-[ferredoxin] + 3 H2O. It catalyses the reaction spheroidene + 2 reduced [2Fe-2S]-[ferredoxin] + O2 + 2 H(+) = 2-hydroxyspheroidene + 2 oxidized [2Fe-2S]-[ferredoxin] + H2O. The enzyme catalyses 2-hydroxyspheroidene + 2 reduced [2Fe-2S]-[ferredoxin] + O2 + 2 H(+) = 2,2-dihydroxyspheroidene + 2 oxidized [2Fe-2S]-[ferredoxin] + H2O. The catalysed reaction is 2,2-dihydroxyspheroidene = spheroiden-2-one + H2O. It carries out the reaction spirilloxanthin + 2 reduced [2Fe-2S]-[ferredoxin] + O2 + 2 H(+) = 2-hydroxyspirilloxanthin + 2 oxidized [2Fe-2S]-[ferredoxin] + H2O. It catalyses the reaction 2-hydroxyspirilloxanthin + 2 reduced [2Fe-2S]-[ferredoxin] + O2 + 2 H(+) = 2,2-dihydroxyspirilloxanthin + 2 oxidized [2Fe-2S]-[ferredoxin] + H2O. The enzyme catalyses 2,2-dihydroxyspirilloxanthin = 2-oxospirilloxanthin + H2O. The catalysed reaction is 2-oxospirilloxanthin + 2 reduced [2Fe-2S]-[ferredoxin] + O2 + 2 H(+) = 2'-hydroxy-2-oxospirilloxanthin + 2 oxidized [2Fe-2S]-[ferredoxin] + H2O. It carries out the reaction 2'-hydroxy-2-oxospirilloxanthin + 2 reduced [2Fe-2S]-[ferredoxin] + O2 + 2 H(+) = 2',2'-dihydroxy-2-oxospirilloxanthin + 2 oxidized [2Fe-2S]-[ferredoxin] + H2O. It catalyses the reaction 2',2'-dihydroxy-2-oxospirilloxanthin = 2,2'-dioxospirilloxanthin + H2O. Its pathway is carotenoid biosynthesis; spheroidene biosynthesis. It functions in the pathway carotenoid biosynthesis; spirilloxanthin biosynthesis. Its function is as follows. Involved in the biosynthesis of the carotenoids spheroidene and spirilloxanthin. Catalyzes the introduction of one keto group at the C-2 position of spheroidene and two keto groups at the C-2 and C-2' positions of spirilloxanthin. The polypeptide is Spheroidene monooxygenase (Rubrivivax gelatinosus (Rhodocyclus gelatinosus)).